Here is a 515-residue protein sequence, read N- to C-terminus: MAEAKNRVCLVVIDGWGISNETKGNAILNAKTPVMDELCVMNSHPIQAHGLHVGLPEGLMGNSEVGHLNIGAGRVVYQDIVRINLAVKNKTLVENKHLKEAAERAIKGNGRMHLCGLVSDGGVHSHIDHLFALITALKQLKVPKLYIQFFGDGRDTSPTSGVGFLQQLIDFVNKEQYGEISTIVGRYYAMDRDKRWERIRVCYDALIGGVGEKTTIDKAIDVIKGRYAKDETDEFLKPIILSDEGRTKDGDTLIFFDYRADRMREITECMGMERYKDLNSNIKHPKNMQVIGMTQYKAEFTFPALFPPESHKNVLAEWLSVNGLTQFHCAETEKYAHVTFFFNGGVEKQFANEERCLVVSPKVATYDLEPPMSSAAVADKVIEQLHMKKHPFVMCNFAPPDMVGHTGVYEAAVKAVEATDIAIGRIYEACKKNDYILMVTADHGNAEKMMAPDGSKHTAHTCNLVPFTCSSMKYKFMDKLPDREMALCDVAPTVLKVMGVPLPSEMTGQPLVNEA.

Residues Asp-14 and Ser-63 each coordinate Mn(2+). The active site involves Ser-63. Substrate-binding positions include His-124, Arg-154–Asp-155, Arg-186, Arg-192, Arg-259–Arg-262, and Lys-334. Asp-401, His-405, Asp-442, His-443, and His-460 together coordinate Mn(2+).

This sequence belongs to the BPG-independent phosphoglycerate mutase family. It depends on Mg(2+) as a cofactor. Mn(2+) serves as cofactor.

It catalyses the reaction (2R)-2-phosphoglycerate = (2R)-3-phosphoglycerate. The protein operates within carbohydrate degradation; glycolysis; pyruvate from D-glyceraldehyde 3-phosphate: step 3/5. Activity is not affected by 2,3-bisphosphoglycerate. In terms of biological role, catalyzes the interconversion of 2-phosphoglycerate and 3-phosphoglycerate. The sequence is that of 2,3-bisphosphoglycerate-independent phosphoglycerate mutase from Brugia malayi (Filarial nematode worm).